A 338-amino-acid polypeptide reads, in one-letter code: 1-aminocyclopropane-1-carboxylate deaminase (338 aa).

Lys-51 is subject to N6-(pyridoxal phosphate)lysine. Ser-78 (nucleophile) is an active-site residue.

This sequence belongs to the ACC deaminase/D-cysteine desulfhydrase family. As to quaternary structure, homotrimer. Pyridoxal 5'-phosphate is required as a cofactor.

The catalysed reaction is 1-aminocyclopropane-1-carboxylate + H2O = 2-oxobutanoate + NH4(+). Its function is as follows. Catalyzes a cyclopropane ring-opening reaction, the irreversible conversion of 1-aminocyclopropane-1-carboxylate (ACC) to ammonia and alpha-ketobutyrate. Allows growth on ACC as a nitrogen source. The polypeptide is 1-aminocyclopropane-1-carboxylate deaminase (Pseudomonas syringae pv. tomato (strain ATCC BAA-871 / DC3000)).